The chain runs to 122 residues: Large ribosomal subunit protein uL14c (122 aa).

The protein belongs to the universal ribosomal protein uL14 family. As to quaternary structure, part of the 50S ribosomal subunit.

The protein localises to the plastid. The protein resides in the chloroplast. Binds to 23S rRNA. The protein is Large ribosomal subunit protein uL14c of Acorus calamus (Sweet flag).